The sequence spans 476 residues: GTPase Der (476 aa).

EngA-type G domains lie at 3-167 (FTVA…GEDM) and 205-380 (LRVA…KTWN). Residues 9–16 (GRPNVGKS), 56–60 (DTAGL), 119–122 (NKSE), 211–218 (GRPNAGKS), 258–262 (DTAGM), and 323–326 (NKWD) contribute to the GTP site. The KH-like domain maps to 381–465 (RRISTAKLNR…PIRVHYRGSD (85 aa)).

The protein belongs to the TRAFAC class TrmE-Era-EngA-EngB-Septin-like GTPase superfamily. EngA (Der) GTPase family. Associates with the 50S ribosomal subunit.

Its function is as follows. GTPase that plays an essential role in the late steps of ribosome biogenesis. In Agrobacterium fabrum (strain C58 / ATCC 33970) (Agrobacterium tumefaciens (strain C58)), this protein is GTPase Der.